The following is a 1397-amino-acid chain: DNA-directed RNA polymerase subunit beta (1397 aa).

Belongs to the RNA polymerase beta chain family. In terms of assembly, the RNAP catalytic core consists of 2 alpha, 1 beta, 1 beta' and 1 omega subunit. When a sigma factor is associated with the core the holoenzyme is formed, which can initiate transcription.

It catalyses the reaction RNA(n) + a ribonucleoside 5'-triphosphate = RNA(n+1) + diphosphate. DNA-dependent RNA polymerase catalyzes the transcription of DNA into RNA using the four ribonucleoside triphosphates as substrates. In Rhodospirillum centenum (strain ATCC 51521 / SW), this protein is DNA-directed RNA polymerase subunit beta.